Consider the following 122-residue polypeptide: MIQMQSVLDVADNSGARRVMCIKVLGGSHRRYAAIGDIIKVTVKEAIPRGKVKKGDVHSAVVVRTRKGVRRPDGAVIRFDRNAAVMLNANNQPIGTRIFGPVTRELRNEKFMKIVSLAPEVL.

Belongs to the universal ribosomal protein uL14 family. In terms of assembly, part of the 50S ribosomal subunit. Forms a cluster with proteins L3 and L19. In the 70S ribosome, L14 and L19 interact and together make contacts with the 16S rRNA in bridges B5 and B8.

In terms of biological role, binds to 23S rRNA. Forms part of two intersubunit bridges in the 70S ribosome. The polypeptide is Large ribosomal subunit protein uL14 (Psychromonas ingrahamii (strain DSM 17664 / CCUG 51855 / 37)).